The primary structure comprises 128 residues: uncharacterized protein (128 aa).

Helical transmembrane passes span 33-53 and 61-81; these read LLYISIIFLFLNYVVDIVCYV and FFCWVFLNLGVIGIIITVIIY. Residues 99-120 show a composition bias toward polar residues; that stretch reads DSLNQNVGESQSNEPPKYTSTF. A disordered region spans residues 99-128; that stretch reads DSLNQNVGESQSNEPPKYTSTFMDELDKQD.

The protein resides in the membrane. This is an uncharacterized protein from Schizosaccharomyces pombe (strain 972 / ATCC 24843) (Fission yeast).